The chain runs to 185 residues: Potassium-transporting ATPase KdpC subunit 2 (185 aa).

The helical transmembrane segment at Leu8–Ala28 threads the bilayer.

This sequence belongs to the KdpC family. The system is composed of three essential subunits: KdpA, KdpB and KdpC.

It localises to the cell membrane. Its subcellular location is the membrane raft. Its function is as follows. Part of the high-affinity ATP-driven potassium transport (or Kdp) system, which catalyzes the hydrolysis of ATP coupled with the electrogenic transport of potassium into the cytoplasm. This subunit acts as a catalytic chaperone that increases the ATP-binding affinity of the ATP-hydrolyzing subunit KdpB by the formation of a transient KdpB/KdpC/ATP ternary complex. This is Potassium-transporting ATPase KdpC subunit 2 from Staphylococcus aureus (strain Mu50 / ATCC 700699).